The primary structure comprises 227 residues: MATPASITNVTVEFLQFPALVTPPGSTKSYFLGGAGVRGLNIQEEFVKFTGIGVYLEDKAVSSLAAKWKGKSAAELLDSLDFYRDIIKGPFEKLIRGSKLRTLDGREYVRKVSENCVAHMQSVGTYSDEEEKAIEEFRNAFKDQNFPPGSTVFYKQSPTGTLGQLIFSKDETIPEHEHAVIDNKPLSEAVLETMIGEIPVSPALKESLATRFHQFFKELEANPNIEN.

Substrate-binding residues include Thr50, Asn115, and Thr193.

This sequence belongs to the chalcone isomerase family.

The catalysed reaction is a chalcone = a flavanone.. It participates in secondary metabolite biosynthesis; flavonoid biosynthesis. Catalyzes the intramolecular cyclization of bicyclic chalcones into tricyclic (S)-flavanones. Responsible for the isomerization of 4,2',4',6'-tetrahydroxychalcone (also termed chalcone) into naringenin. The protein is Chalcone--flavanone isomerase 2-B (CHI2-B) of Glycine max (Soybean).